The primary structure comprises 659 residues: Threonine--tRNA ligase (659 aa).

The TGS domain maps to 7–70 (DSELIKLTLP…QQDGAIEIVT (64 aa)). Residues 253–555 (DHRKLGSELE…LIENFAGNFP (303 aa)) form a catalytic region. Positions 351, 402, and 532 each coordinate Zn(2+).

This sequence belongs to the class-II aminoacyl-tRNA synthetase family. As to quaternary structure, homodimer. It depends on Zn(2+) as a cofactor.

The protein localises to the cytoplasm. It carries out the reaction tRNA(Thr) + L-threonine + ATP = L-threonyl-tRNA(Thr) + AMP + diphosphate + H(+). In terms of biological role, catalyzes the attachment of threonine to tRNA(Thr) in a two-step reaction: L-threonine is first activated by ATP to form Thr-AMP and then transferred to the acceptor end of tRNA(Thr). Also edits incorrectly charged L-seryl-tRNA(Thr). The protein is Threonine--tRNA ligase of Chloroherpeton thalassium (strain ATCC 35110 / GB-78).